A 552-amino-acid chain; its full sequence is Ribosomal lysine N-methyltransferase 3 (552 aa).

Positions 26–335 (SKCDIRESPL…QGQEIFNSYG (310 aa)) constitute an SET domain. Tyrosine 334 contributes to the S-adenosyl-L-methionine binding site. The interval 399–432 (EDEEDEDGQAKSDNLSDDIESEEEEEEEEGDDSL) is disordered. Positions 413 to 432 (LSDDIESEEEEEEEEGDDSL) are enriched in acidic residues.

This sequence belongs to the class V-like SAM-binding methyltransferase superfamily.

Its subcellular location is the nucleus. In terms of biological role, S-adenosyl-L-methionine-dependent protein-lysine N-methyltransferase that monomethylates 60S ribosomal protein L42 (RPL42A and RPL42B) at 'Lys-40'. The protein is Ribosomal lysine N-methyltransferase 3 of Saccharomyces cerevisiae (strain ATCC 204508 / S288c) (Baker's yeast).